A 116-amino-acid chain; its full sequence is Methionine-R-sulfoxide reductase B1 (116 aa).

The 106-residue stretch at 1–106 (MSFCSFFGGE…FSSSLKFVPK (106 aa)) folds into the MsrB domain. Residues Cys23, Cys26, Cys71, and Cys74 each coordinate Zn(2+). Sec95 (nucleophile) is an active-site residue. A non-standard amino acid (selenocysteine) is located at residue Sec95.

This sequence belongs to the MsrB Met sulfoxide reductase family. It depends on Zn(2+) as a cofactor. In terms of processing, truncated MSRB1/SEPX1 proteins produced by failed UGA/Sec decoding are ubiquitinated by some Cul2-RING E3 ubiquitin-protein ligase complexes (containing either PRAME, PRAMF6, PRAMF9 or FEM1C as substrate-recognition component).

It localises to the cytoplasm. Its subcellular location is the nucleus. It is found in the cytoskeleton. The enzyme catalyses L-methionyl-[protein] + [thioredoxin]-disulfide + H2O = L-methionyl-(R)-S-oxide-[protein] + [thioredoxin]-dithiol. It carries out the reaction [thioredoxin]-disulfide + L-methionine + H2O = L-methionine (R)-S-oxide + [thioredoxin]-dithiol. Functionally, methionine-sulfoxide reductase that specifically reduces methionine (R)-sulfoxide back to methionine. While in many cases, methionine oxidation is the result of random oxidation following oxidative stress, methionine oxidation is also a post-translational modification that takes place on specific residue. Acts as a regulator of actin assembly by reducing methionine (R)-sulfoxide mediated by MICALs (MICAL1, MICAL2 or MICAL3) on actin, thereby promoting filament repolymerization. Plays a role in innate immunity by reducing oxidized actin, leading to actin repolymerization in macrophages. This Homo sapiens (Human) protein is Methionine-R-sulfoxide reductase B1 (MSRB1).